The primary structure comprises 444 residues: Probable glycolate oxidase iron-sulfur subunit (444 aa).

4Fe-4S ferredoxin-type domains follow at residues 14–46 and 69–100; these read FKERMDEGELLNCMRCGFCLPSCPTYIESGFQE and EDVERSLSLCLGCRACEPVCPSGVKYGQLLEE. Residues Cys-26, Cys-29, Cys-32, Cys-36, Cys-78, Cys-81, Cys-84, and Cys-88 each contribute to the [4Fe-4S] cluster site.

As to quaternary structure, the glycolate oxidase likely consists of several subunits including GlcD and GlcF. It depends on [4Fe-4S] cluster as a cofactor.

The protein resides in the cell membrane. It catalyses the reaction glycolate + A = glyoxylate + AH2. It carries out the reaction (R)-lactate + A = pyruvate + AH2. Component of a complex that catalyzes the oxidation of glycolate to glyoxylate. Is also able to oxidize D-lactate ((R)-lactate). Does not link directly to O(2), and 2,6-dichloroindophenol (DCIP) and phenazine methosulfate (PMS) can act as artificial electron acceptors in vitro, but the physiological molecule that functions as primary electron acceptor during glycolate oxidation is unknown. This Bacillus subtilis (strain 168) protein is Probable glycolate oxidase iron-sulfur subunit (glcF).